We begin with the raw amino-acid sequence, 396 residues long: Protein Njmu-R1 (396 aa).

A disordered region spans residues M1–A78. Phosphoserine is present on residues S8 and S18. Residues M9 to S24 are compositionally biased toward acidic residues. Residues G58–T67 are compositionally biased toward polar residues.

In terms of assembly, component of the complex WDR11 composed of C17orf75, FAM91A1 and WDR11; FAM91A1 and WDR11 are required for proper location of the complex. Interacts with TBC1D23; this interaction may be indirect and recruits TBC1D23 to AP-1-derived vesicles. Highly expressed in testis and also expressed in fetal testis.

The protein localises to the golgi apparatus. It localises to the trans-Golgi network. Its subcellular location is the cytoplasmic vesicle. As component of the WDR11 complex acts together with TBC1D23 to facilitate the golgin-mediated capture of vesicles generated using AP-1. May have a role in spermatogenesis. In Homo sapiens (Human), this protein is Protein Njmu-R1 (C17orf75).